Reading from the N-terminus, the 373-residue chain is Protein translocase subunit SecF (373 aa).

The next 6 membrane-spanning stretches (helical) occupy residues 26–46 (IWYGISILITITAIVGLAVRG), 142–162 (WQGLGIFMVLVVIYLAIAFEW), 166–186 (LAAFVALIHDITITVGIYALV), 193–213 (GTVIGLLTILGYSLYDTVVVF), 251–271 (VVALLPVAGLLFIGGGVLGAG), and 280–300 (LFVGLAAGAYSSIFIATPLVA). Low complexity predominate over residues 322 to 332 (QGAAKGESAES). Residues 322-373 (QGAAKGESAESAADEGAYDADEPDDAAPAVVGPRNQPASRGRGRGRPSGKRR) form a disordered region. Acidic residues predominate over residues 333–346 (AADEGAYDADEPDD). A compositionally biased stretch (basic residues) spans 362-373 (GRGRGRPSGKRR).

The protein belongs to the SecD/SecF family. SecF subfamily. As to quaternary structure, forms a complex with SecD. Part of the essential Sec protein translocation apparatus which comprises SecA, SecYEG and auxiliary proteins SecDF. Other proteins may also be involved.

The protein localises to the cell membrane. Functionally, part of the Sec protein translocase complex. Interacts with the SecYEG preprotein conducting channel. SecDF uses the proton motive force (PMF) to complete protein translocation after the ATP-dependent function of SecA. This chain is Protein translocase subunit SecF, found in Streptomyces coelicolor (strain ATCC BAA-471 / A3(2) / M145).